Here is a 1781-residue protein sequence, read N- to C-terminus: Chitin synthase 7 (1781 aa).

Asparagine 133, asparagine 534, asparagine 629, asparagine 644, asparagine 655, and asparagine 660 each carry an N-linked (GlcNAc...) asparagine glycan. 2 consecutive transmembrane segments (helical) span residues 741–761 (AWVAFVWALTFWIPSPLLKFV) and 777–797 (LVLFFIILLLNGLIIFWIIGF). 2 N-linked (GlcNAc...) asparagine glycosylation sites follow: asparagine 889 and asparagine 1011. A helical membrane pass occupies residues 1048-1068 (LLLAFAIIICIVTAVKFLAAL). Asparagine 1413 carries N-linked (GlcNAc...) asparagine glycosylation. The next 3 helical transmembrane spans lie at 1444 to 1464 (LTGTIILPSTTVYIGYLIYVL), 1471 to 1491 (IPYISLAMIGAVYGHQALIFI), and 1499 to 1519 (IGWMIIYILAFPIYSFILPLY). Asparagine 1526 carries N-linked (GlcNAc...) asparagine glycosylation. Positions 1677-1712 (QANLSPAAGGGHSRSGTALGFSSGSRSPMPDAMRSQ) are disordered. Polar residues predominate over residues 1690 to 1702 (RSGTALGFSSGSR). The DEK-C domain maps to 1723–1779 (GPTDMAIVESIRSVLCEVDLDTVTKKQVRALVEQRLQTELVGERRTFMDRQIDHELE).

The protein belongs to the chitin synthase family. Class V subfamily.

The protein resides in the cell membrane. It carries out the reaction [(1-&gt;4)-N-acetyl-beta-D-glucosaminyl](n) + UDP-N-acetyl-alpha-D-glucosamine = [(1-&gt;4)-N-acetyl-beta-D-glucosaminyl](n+1) + UDP + H(+). In terms of biological role, polymerizes chitin, a structural polymer of the cell wall and septum, by transferring the sugar moiety of UDP-GlcNAc to the non-reducing end of the growing chitin polymer. Shows additive effects in septum formation with CHS1, CHS2, CHS3A, CHS4, CHS5 and CHS6. Indispensable for perithecia formation and regulates conidiation. Plays an important role in the response to cell wall stress. Also required for hyphal growth and pathogenicity. This is Chitin synthase 7 from Gibberella zeae (strain ATCC MYA-4620 / CBS 123657 / FGSC 9075 / NRRL 31084 / PH-1) (Wheat head blight fungus).